Here is a 117-residue protein sequence, read N- to C-terminus: Large ribosomal subunit protein bL20 (117 aa).

The protein belongs to the bacterial ribosomal protein bL20 family.

In terms of biological role, binds directly to 23S ribosomal RNA and is necessary for the in vitro assembly process of the 50S ribosomal subunit. It is not involved in the protein synthesizing functions of that subunit. This is Large ribosomal subunit protein bL20 from Natranaerobius thermophilus (strain ATCC BAA-1301 / DSM 18059 / JW/NM-WN-LF).